The primary structure comprises 861 residues: Rod cGMP-specific 3',5'-cyclic phosphodiesterase subunit alpha (861 aa).

Residue glycine 2 is modified to N-acetylglycine. GAF domains follow at residues 73 to 222 and 254 to 431; these read QAER…NLIM and DIER…GWSV. The PDEase domain maps to 483 to 816; the sequence is EEEELAEILQ…KEWKALADEY (334 aa). The Proton donor role is filled by histidine 559. A divalent metal cation contacts are provided by histidine 563, histidine 599, aspartate 600, and aspartate 720. The tract at residues 821–861 is disordered; that stretch reads KALEEEKQKQQTAKQGAAGDQPGGNPSPAGGAPASKSCCIQ. Positions 830–861 are enriched in low complexity; it reads QQTAKQGAAGDQPGGNPSPAGGAPASKSCCIQ. Residue cysteine 858 is modified to Cysteine methyl ester. Cysteine 858 is lipidated: S-farnesyl cysteine. A propeptide spans 859–861 (removed in mature form); sequence CIQ.

Belongs to the cyclic nucleotide phosphodiesterase family. Oligomer composed of two catalytic chains (alpha and beta), an inhibitory chain (gamma) and the delta chain. Requires a divalent metal cation as cofactor.

It localises to the cell membrane. It is found in the cell projection. The protein resides in the cilium. The protein localises to the photoreceptor outer segment. The enzyme catalyses 3',5'-cyclic GMP + H2O = GMP + H(+). Rod-specific cGMP phosphodiesterase that catalyzes the hydrolysis of 3',5'-cyclic GMP. This protein participates in processes of transmission and amplification of the visual signal. The polypeptide is Rod cGMP-specific 3',5'-cyclic phosphodiesterase subunit alpha (Canis lupus familiaris (Dog)).